The primary structure comprises 192 residues: Lipid A acyltransferase PagP (192 aa).

The signal sequence occupies residues 1–29 (MVVNVVIVAKKYFLFITLLIIQVSLPAHA). Catalysis depends on residues His64, Asp107, and Ser108.

This sequence belongs to the lipid A palmitoyltransferase family. Homodimer.

The protein localises to the cell outer membrane. It catalyses the reaction a lipid A + a 1,2-diacyl-sn-glycero-3-phosphocholine = a hepta-acyl lipid A + a 2-acyl-sn-glycero-3-phosphocholine. It carries out the reaction a lipid IVA + a 1,2-diacyl-sn-glycero-3-phosphocholine = a lipid IVB + a 2-acyl-sn-glycero-3-phosphocholine. The enzyme catalyses a lipid IIA + a 1,2-diacyl-sn-glycero-3-phosphocholine = a lipid IIB + a 2-acyl-sn-glycero-3-phosphocholine. Functionally, transfers a fatty acid residue from the sn-1 position of a phospholipid to the N-linked hydroxyfatty acid chain on the proximal unit of lipid A or its precursors. The polypeptide is Lipid A acyltransferase PagP (Citrobacter rodentium (strain ICC168) (Citrobacter freundii biotype 4280)).